The primary structure comprises 362 residues: P2Y purinoceptor 1 (362 aa).

Residues 1–40 (MTEALISAALNGTQPELLAGGWAAGNASTKCSLTKTGFQF) are Extracellular-facing. 2 N-linked (GlcNAc...) asparagine glycosylation sites follow: Asn-11 and Asn-26. Cystine bridges form between Cys-31–Cys-285 and Cys-113–Cys-191. Residue Lys-35 coordinates ADP. A helical transmembrane segment spans residues 41-63 (YYLPTVYILVFITGFLGNSVAIW). Residues 64–76 (MFVFHMRPWSGIS) lie on the Cytoplasmic side of the membrane. Residues 77 to 98 (VYMFNLALADFLYVLTLPALIF) form a helical membrane-spanning segment. Topologically, residues 99–114 (YYFNKTDWIFGDVMCK) are extracellular. Asn-102 is a glycosylation site (N-linked (GlcNAc...) asparagine). A helical transmembrane segment spans residues 115-136 (LQRFIFHVNLYGSILFLTCISV). Topologically, residues 137–155 (HRYTGVVHPLKSLGRLKKK) are cytoplasmic. A helical membrane pass occupies residues 156 to 177 (NAVYVSSLVWALVVAVIAPILF). The Extracellular segment spans residues 178–203 (YSGTGVRRNKTITCYDTTADEYLRSY). Asn-186 carries an N-linked (GlcNAc...) asparagine glycan. 192–194 (YDT) serves as a coordination point for ADP. The helical transmembrane segment at 204-226 (FVYSMCTTVFMFCIPFIVILGCY) threads the bilayer. The Cytoplasmic segment spans residues 227-249 (GLIVKALIYKDLDNSPLRRKSIY). Residues 250-273 (LVIIVLTVFAVSYLPFHVMKTLNL) traverse the membrane as a helical segment. ADP is bound by residues 272 to 276 (NLRAR), 292 to 295 (YATY), and Arg-299. Over 274–292 (RARLDFQTPQMCAFNDKVY) the chain is Extracellular. Residues 293-314 (ATYQVTRGLASLNSCVDPILYF) form a helical membrane-spanning segment. Residues 315–362 (LAGDTFRRRLSRATRKSSRRSEPNVQSKSEEMTLNILTEYKQNGDTSL) lie on the Cytoplasmic side of the membrane.

The protein belongs to the G-protein coupled receptor 1 family. Mainly found in blood, brain, and lung. To a lesser extent in stomach, gut and skeletal muscle.

It localises to the cell membrane. Receptor for extracellular adenine nucleotides such as ADP. In platelets, binding to ADP leads to mobilization of intracellular calcium ions via activation of phospholipase C, a change in platelet shape, and ultimately platelet aggregation. The polypeptide is P2Y purinoceptor 1 (P2RY1) (Meleagris gallopavo (Wild turkey)).